Here is a 43-residue protein sequence, read N- to C-terminus: Antimicrobial protein PcfHb (43 aa).

Possible monomer. Expressed in mucus-secreting tissues.

It localises to the secreted. In terms of biological role, shows antimicrobial activity against M.luteus (MIC=4 uM) and E.coli (MIC=12 uM), as well as against the yeast C.tropicalis (MIC=4 uM). Shows a pro-inflammatory effect, since the topical application of the protein induces an increase of cellular recruitment characterized by an increase in the number of leukocyte rolling. Does not show hemolytic activity on human erythrocytes (at doses up to 100 uM). This chain is Antimicrobial protein PcfHb, found in Potamotrygon cf. henlei (Freshwater stingray).